We begin with the raw amino-acid sequence, 229 residues long: MEFNFTPIPAVFCKKLNRFVGEVVLQGEKVLVHIPNSGRLAEILTEGRLVYLREGKNPGRKYQYDLVLAQMPESLVLVDSLLPNKIAQGLLEKGIIKPFSREIDQVAAEQTKGQSRFDFKVQLRDKTGFIEVKSVTLVEGKYALFPDAPTPRGVRHLEELRALSSQYLTAVVFLICREDAEVFKPNDKCDPYFASALKKAAMAGVYIKAYRLKLDLKGVYFDREMEVVL.

The protein belongs to the SfsA family.

This chain is Sugar fermentation stimulation protein homolog, found in Carboxydothermus hydrogenoformans (strain ATCC BAA-161 / DSM 6008 / Z-2901).